The sequence spans 350 residues: Ketol-acid reductoisomerase (NADP(+)) 2 (350 aa).

One can recognise a KARI N-terminal Rossmann domain in the interval 3-183; the sequence is ATIWYEKDAD…GALRAGAIKT (181 aa). NADP(+) contacts are provided by residues 26–29, Arg-49, Ser-52, Ser-54, and 84–87; these read YGSQ and DQYQ. His-109 is a catalytic residue. NADP(+) is bound at residue Gly-135. The KARI C-terminal knotted domain occupies 184 to 327; the sequence is TFTEETETDL…PKLRAMFSWN (144 aa). 4 residues coordinate Mg(2+): Asp-192, Glu-196, Glu-228, and Glu-232. Ser-253 is a binding site for substrate. The interval 331–350 is disordered; it reads AKDKDETESFNGKIARTQVQ.

Belongs to the ketol-acid reductoisomerase family. Mg(2+) is required as a cofactor.

It carries out the reaction (2R)-2,3-dihydroxy-3-methylbutanoate + NADP(+) = (2S)-2-acetolactate + NADPH + H(+). It catalyses the reaction (2R,3R)-2,3-dihydroxy-3-methylpentanoate + NADP(+) = (S)-2-ethyl-2-hydroxy-3-oxobutanoate + NADPH + H(+). The protein operates within amino-acid biosynthesis; L-isoleucine biosynthesis; L-isoleucine from 2-oxobutanoate: step 2/4. It functions in the pathway amino-acid biosynthesis; L-valine biosynthesis; L-valine from pyruvate: step 2/4. Involved in the biosynthesis of branched-chain amino acids (BCAA). Catalyzes an alkyl-migration followed by a ketol-acid reduction of (S)-2-acetolactate (S2AL) to yield (R)-2,3-dihydroxy-isovalerate. In the isomerase reaction, S2AL is rearranged via a Mg-dependent methyl migration to produce 3-hydroxy-3-methyl-2-ketobutyrate (HMKB). In the reductase reaction, this 2-ketoacid undergoes a metal-dependent reduction by NADPH to yield (R)-2,3-dihydroxy-isovalerate. The chain is Ketol-acid reductoisomerase (NADP(+)) 2 from Bifidobacterium longum (strain NCC 2705).